An 828-amino-acid polypeptide reads, in one-letter code: Auxin response factor 2B (828 aa).

A DNA-binding region (TF-B3) is located at residues 128-230; sequence FCKTLTASDT…ELRVGVRRAM (103 aa). 3 disordered regions span residues 348–397, 681–703, and 791–828; these read PDRV…GSSK, EQFQ…HSTR, and NPGT…PEDS. A compositionally biased stretch (pro residues) spans 360-370; the sequence is LSPPALNPLPI. The span at 380 to 390 shows a compositional bias: polar residues; sequence VLPSSPDSSVL. Residues 703 to 786 form the PB1 domain; the sequence is RSCTKVHKQG…RKIFIYTKDE (84 aa). Polar residues predominate over residues 791–806; that stretch reads NPGTLNSKGEDNSSVA.

The protein belongs to the ARF family. In terms of assembly, homodimers and heterodimers. As to expression, expressed in root, leaf and stem. Also expressed in flower and fruit. Expressed in flower buds about three days before opening including stamen, petal and sepal with the highest in ovary.

It localises to the nucleus. Its function is as follows. Auxin response factors (ARFs) are transcriptional factors that binds specifically to the DNA sequence 5'-TGTCTC-3' found in the auxin-responsive promoter elements (AuxREs). Could act as transcriptional activator or repressor. Involved in the control of fruit ripening process. Regulates expression of a number of ripening regulators, transcription factors, and ethylene biosynthesis and signaling components. May act as a transcriptional repressor of auxin-responsive genes. The chain is Auxin response factor 2B from Solanum lycopersicum (Tomato).